A 207-amino-acid polypeptide reads, in one-letter code: NADH-quinone oxidoreductase chain 5 (207 aa).

This sequence belongs to the complex I 30 kDa subunit family. As to quaternary structure, NDH-1 is composed of at least 14 different subunits, Nqo1 to Nqo14. The complex has a L-shaped structure, with the hydrophobic arm (subunits Nqo7, Nqo8, Nqo10 to Nqo14) embedded in the inner membrane and the hydrophilic peripheral arm (subunits Nqo1 to Nqo6, Nqo9) protruding into the bacterial cytoplasm. The hydrophilic domain contains all the redox centers.

It is found in the cell inner membrane. The enzyme catalyses a quinone + NADH + 5 H(+)(in) = a quinol + NAD(+) + 4 H(+)(out). In terms of biological role, NDH-1 shuttles electrons from NADH, via FMN and iron-sulfur (Fe-S) centers, to quinones in the respiratory chain. The immediate electron acceptor for the enzyme in this species is believed to be ubiquinone. Couples the redox reaction to proton translocation (for every two electrons transferred, four hydrogen ions are translocated across the cytoplasmic membrane), and thus conserves the redox energy in a proton gradient. This chain is NADH-quinone oxidoreductase chain 5 (nqo5), found in Paracoccus denitrificans.